Consider the following 150-residue polypeptide: Alkaline nuclease (150 aa).

Belongs to the baculo-herpesviridae alkaline nuclease family.

The polypeptide is Alkaline nuclease (UL12) (Suid herpesvirus 1 (strain NIA-3) (SuHV-1)).